Here is an 88-residue protein sequence, read N- to C-terminus: N(2)-fixation sustaining protein CowN (88 aa).

Belongs to the CowN family.

Is required to sustain N(2)-dependent growth in the presence of low levels of carbon monoxide (CO). Probably acts by protecting the N(2) fixation ability of the nitrogenase complex, which is inactivated in the presence of CO. The sequence is that of N(2)-fixation sustaining protein CowN from Rhodomicrobium vannielii (strain ATCC 17100 / DSM 162 / LMG 4299 / NCIMB 10020 / ATH 3.1.1).